We begin with the raw amino-acid sequence, 443 residues long: 23S rRNA (uracil(1939)-C(5))-methyltransferase RlmD (443 aa).

Residues 10–68 (RVTTKQTLTVTVNSLDPFGQGVAHHQGKAIFIPGALPGEQAEIELTEQKRQYSRGKLKR) form the TRAM domain. [4Fe-4S] cluster contacts are provided by Cys81, Cys87, Cys90, and Cys168. Residues Gln271, Phe300, Asn305, Glu321, Asn348, and Asp369 each contribute to the S-adenosyl-L-methionine site. Cys395 functions as the Nucleophile in the catalytic mechanism.

The protein belongs to the class I-like SAM-binding methyltransferase superfamily. RNA M5U methyltransferase family. RlmD subfamily.

The enzyme catalyses uridine(1939) in 23S rRNA + S-adenosyl-L-methionine = 5-methyluridine(1939) in 23S rRNA + S-adenosyl-L-homocysteine + H(+). In terms of biological role, catalyzes the formation of 5-methyl-uridine at position 1939 (m5U1939) in 23S rRNA. In Yersinia enterocolitica serotype O:8 / biotype 1B (strain NCTC 13174 / 8081), this protein is 23S rRNA (uracil(1939)-C(5))-methyltransferase RlmD.